A 330-amino-acid polypeptide reads, in one-letter code: Global transcription regulator sge1 (330 aa).

Disordered stretches follow at residues 93–123 (PPGEKKRARGRNGKSTTQSGGITKSRPRNSV) and 239–306 (QYAP…HQPQ). Residues 105–114 (GKSTTQSGGI) show a composition bias toward polar residues. A compositionally biased stretch (low complexity) spans 250-306 (QQPALQQQPQQQPQPQHQPQLQYQPQPHQHQPQLQYQPQQQHQPQQQYRPQPQHQPQ).

Belongs to the MIT1/WOR1 family.

The protein resides in the nucleus. Global transcriptional regulator of pathogenicity. Acts as an activator of parasitic growth. Not essential for colonization or penetration of the root surface, but required for expression of genes encoding effectors that are secreted during infection. Involved in conidiogenesis, but is not required for conidial fitness, overall (colony) morphology, vegetative growth or carbon source utilization. This Fusarium oxysporum f. sp. lycopersici (strain 4287 / CBS 123668 / FGSC 9935 / NRRL 34936) (Fusarium vascular wilt of tomato) protein is Global transcription regulator sge1.